The following is a 349-amino-acid chain: Ion-translocating oxidoreductase complex subunit D (349 aa).

The next 4 helical transmembrane spans lie at 20–40 (IMFL…YFFG), 42–62 (GVLI…IIIL), 83–105 (VLLG…CFFA), and 120–140 (IFNP…VHMT). FMN phosphoryl threonine is present on T184. Transmembrane regions (helical) follow at residues 212–232 (IVSI…CFLL), 236–256 (VICW…SSIT), 263–283 (FFCS…AFFI), 291–311 (SCTK…VWII), and 319–339 (DGIA…DAYL).

The protein belongs to the NqrB/RnfD family. The complex is composed of six subunits: RnfA, RnfB, RnfC, RnfD, RnfE and RnfG. FMN serves as cofactor.

Its subcellular location is the cell inner membrane. In terms of biological role, part of a membrane-bound complex that couples electron transfer with translocation of ions across the membrane. The polypeptide is Ion-translocating oxidoreductase complex subunit D (Buchnera aphidicola subsp. Schizaphis graminum (strain Sg)).